Reading from the N-terminus, the 163-residue chain is NADH-quinone oxidoreductase subunit I (163 aa).

4Fe-4S ferredoxin-type domains are found at residues 53-83 (LRRY…IEAG) and 94-123 (VRYD…EGPN). [4Fe-4S] cluster contacts are provided by C63, C66, C69, C73, C103, C106, C109, and C113.

It belongs to the complex I 23 kDa subunit family. NDH-1 is composed of 14 different subunits. Subunits NuoA, H, J, K, L, M, N constitute the membrane sector of the complex. Requires [4Fe-4S] cluster as cofactor.

The protein resides in the cell inner membrane. The enzyme catalyses a quinone + NADH + 5 H(+)(in) = a quinol + NAD(+) + 4 H(+)(out). Functionally, NDH-1 shuttles electrons from NADH, via FMN and iron-sulfur (Fe-S) centers, to quinones in the respiratory chain. The immediate electron acceptor for the enzyme in this species is believed to be ubiquinone. Couples the redox reaction to proton translocation (for every two electrons transferred, four hydrogen ions are translocated across the cytoplasmic membrane), and thus conserves the redox energy in a proton gradient. This is NADH-quinone oxidoreductase subunit I from Bartonella henselae (strain ATCC 49882 / DSM 28221 / CCUG 30454 / Houston 1) (Rochalimaea henselae).